The primary structure comprises 327 residues: Methionine import ATP-binding protein MetN (327 aa).

An ABC transporter domain is found at valine 3–leucine 239. ATP is bound at residue glycine 36–serine 43.

Belongs to the ABC transporter superfamily. Methionine importer (TC 3.A.1.24) family. The complex is composed of two ATP-binding proteins (MetN), two transmembrane proteins (MetI) and a solute-binding protein (MetQ).

The protein localises to the cell inner membrane. The enzyme catalyses L-methionine(out) + ATP + H2O = L-methionine(in) + ADP + phosphate + H(+). It carries out the reaction D-methionine(out) + ATP + H2O = D-methionine(in) + ADP + phosphate + H(+). Its function is as follows. Part of the ABC transporter complex MetNIQ involved in methionine import. Responsible for energy coupling to the transport system. The polypeptide is Methionine import ATP-binding protein MetN (Helicobacter pylori (strain HPAG1)).